Consider the following 289-residue polypeptide: 2-hydroxy-6-oxononadienedioate/2-hydroxy-6-oxononatrienedioate hydrolase (289 aa).

Residue His269 is the Proton acceptor of the active site.

Belongs to the AB hydrolase superfamily. MhpC family. As to quaternary structure, homodimer.

The enzyme catalyses (2Z,4E)-2-hydroxy-6-oxonona-2,4-dienedioate + H2O = (2Z)-2-hydroxypenta-2,4-dienoate + succinate + H(+). The catalysed reaction is (2Z,4E,7E)-2-hydroxy-6-oxonona-2,4,7-trienedioate + H2O = (2Z)-2-hydroxypenta-2,4-dienoate + fumarate + H(+). Its pathway is aromatic compound metabolism; 3-phenylpropanoate degradation. Catalyzes the cleavage of the C5-C6 bond of 2-hydroxy-6-oxononadienedioate and 2-hydroxy-6-oxononatrienedioate, a dienol ring fission product of the bacterial meta-cleavage pathway for degradation of phenylpropionic acid. The chain is 2-hydroxy-6-oxononadienedioate/2-hydroxy-6-oxononatrienedioate hydrolase from Cupriavidus pinatubonensis (strain JMP 134 / LMG 1197) (Cupriavidus necator (strain JMP 134)).